Reading from the N-terminus, the 54-residue chain is ATP synthase protein 8 (54 aa).

The helical transmembrane segment at 8 to 28 threads the bilayer; it reads WWLLNFFLGWTSLLVIFIILL.

It belongs to the ATPase protein 8 family. As to quaternary structure, F-type ATPases have 2 components, CF(1) - the catalytic core - and CF(0) - the membrane proton channel.

Its subcellular location is the mitochondrion membrane. In terms of biological role, mitochondrial membrane ATP synthase (F(1)F(0) ATP synthase or Complex V) produces ATP from ADP in the presence of a proton gradient across the membrane which is generated by electron transport complexes of the respiratory chain. F-type ATPases consist of two structural domains, F(1) - containing the extramembraneous catalytic core and F(0) - containing the membrane proton channel, linked together by a central stalk and a peripheral stalk. During catalysis, ATP synthesis in the catalytic domain of F(1) is coupled via a rotary mechanism of the central stalk subunits to proton translocation. Part of the complex F(0) domain. Minor subunit located with subunit a in the membrane. This Patiria pectinifera (Starfish) protein is ATP synthase protein 8 (MT-ATP8).